The primary structure comprises 632 residues: Palmitoyltransferase ZDHHC17 (632 aa).

Residues 1–304 (MQREEGFNTK…LKADKEFRQK (304 aa)) are Cytoplasmic-facing. The tract at residues 11–305 (MADGPDEYDT…KADKEFRQKV (295 aa)) is necessary and sufficient for interaction with DNAJC5 and SNAP25. ANK repeat units lie at residues 51 to 86 (THID…VRQP), 89 to 118 (ENVT…IVDQ), 123 to 152 (LNST…DPSL), 156 to 185 (EGCS…DVDM), 189 to 219 (NGMT…SVNL), 224 to 253 (HKNT…NVDA), and 257 to 286 (KGES…AKGY). The next 2 helical transmembrane spans lie at 305–325 (VMLG…DLNI) and 326–346 (DSWL…QFLS). Residues 347-357 (KSFFDHSMHSA) are Cytoplasmic-facing. Residues 358–378 (LPLGIYLATKFWMYVTWFFWF) form a helical membrane-spanning segment. Topologically, residues 379–381 (WND) are lumenal. Residues 382-402 (LNFLFIHLPFLANSVALFYNF) form a helical membrane-spanning segment. Residues 403-480 (GKSWKSDPGI…GNCVGAGNHR (78 aa)) are Cytoplasmic-facing. One can recognise a DHHC domain in the interval 437–487 (IFCSTCLIRKPVRSKHCGVCNRCIAKFDHHCPWVGNCVGAGNHRYFMGYLF). Residue Cys467 is the S-palmitoyl cysteine intermediate of the active site. The helical transmembrane segment at 481 to 501 (YFMGYLFFLLFMICWMIYGCI) threads the bilayer. The Lumenal segment spans residues 502 to 529 (SYWGLHCETTYTKDGFWTYITQIATCSP). The chain crosses the membrane as a helical span at residues 530-550 (WMFWMFLNSVFHFMWVAVLLM). The Cytoplasmic portion of the chain corresponds to 551-632 (CQMYQISCLG…QISGSGYQLV (82 aa)).

It belongs to the DHHC palmitoyltransferase family. AKR/ZDHHC17 subfamily. In terms of assembly, interacts (via ANK repeats) with numerous proteins (via the consensus sequence motif [VIAP]-[VIT]-x-x-Q-P). Interacts (via ANK repeats) with CLIP3. Interacts (via ANK repeats) with HTT; this interaction is inversely correlated to the length of the polyglutamine tract added to the huntingtin protein in Huntington disease. Interacts (via ANK repeats) with DNAJC5 (via C-terminus). Interacts (via ANK repeats) with MAP6. Interacts (via ANK repeats) with SNAP23. Interacts (via ANK repeats) with SNAP25. Interacts (via ANK repeats) with EVL. Interacts with SPRED1 and SPRED3. Interacts with GPM6A and OPTN. May interact (via ANK repeats) with SPRED2. May interact with NTRK1; may regulate its localization and function. In terms of processing, autopalmitoylated. Autopalmitoylation has a regulatory role in ZDHHC17-mediated Mg(2+) transport. In terms of tissue distribution, expressed in all brain regions. Expression is highest in the cortex, cerebellum, occipital lobe and caudate and lowest in the spinal cord. Expression is also seen in testis, pancreas, heart and kidney.

It is found in the golgi apparatus membrane. The protein localises to the cytoplasmic vesicle membrane. The protein resides in the presynaptic cell membrane. It carries out the reaction L-cysteinyl-[protein] + hexadecanoyl-CoA = S-hexadecanoyl-L-cysteinyl-[protein] + CoA. The enzyme catalyses L-cysteinyl-[protein] + tetradecanoyl-CoA = S-tetradecanoyl-L-cysteinyl-[protein] + CoA. The catalysed reaction is L-cysteinyl-[protein] + octadecanoyl-CoA = S-octadecanoyl-L-cysteinyl-[protein] + CoA. Functionally, palmitoyltransferase that catalyzes the addition of palmitate onto various protein substrates and is involved in a variety of cellular processes. Has no stringent fatty acid selectivity and in addition to palmitate can also transfer onto target proteins myristate from tetradecanoyl-CoA and stearate from octadecanoyl-CoA. Palmitoyltransferase specific for a subset of neuronal proteins, including SNAP25, DLG4/PSD95, GAD2, SYT1 and HTT. Also palmitoylates neuronal protein GPM6A as well as SPRED1 and SPRED3. Could also play a role in axonogenesis through the regulation of NTRK1 and the downstream ERK1/ERK2 signaling cascade. May be involved in the sorting or targeting of critical proteins involved in the initiating events of endocytosis at the plasma membrane. May play a role in Mg(2+) transport. Could also palmitoylate DNAJC5 and regulate its localization to the Golgi membrane. Palmitoylates CASP6, thereby preventing its dimerization and subsequent activation. This is Palmitoyltransferase ZDHHC17 from Homo sapiens (Human).